Here is a 27-residue protein sequence, read N- to C-terminus: uncharacterized protein (27 aa).

The chain crosses the membrane as a helical span at residues 6–26; that stretch reads IIVLGALIALLELIRFLLQLL.

This sequence belongs to the DinQ family.

Its subcellular location is the cell inner membrane. This is an uncharacterized protein from Escherichia coli (strain K12).